Reading from the N-terminus, the 199-residue chain is uncharacterized protein (199 aa).

Residues 1 to 23 (MSARAPKELRLALPPCLLNRTFA) form the signal peptide. N-linked (GlcNAc...) asparagine glycosylation is found at asparagine 19 and asparagine 26. At 24–60 (SHNASGGSSAGLRSSGAGGGTCITQVGQQLFQSFSST) the chain is on the extracellular side. A helical membrane pass occupies residues 61–81 (LVLIVLVTLIFCLLVLSLSTF). Topologically, residues 82-199 (HIHKRRMKKR…EGLLQTVVLS (118 aa)) are cytoplasmic. The disordered stretch occupies residues 93–190 (MQRAQEEYER…ASSCLDTPGE (98 aa)). 2 stretches are compositionally biased toward basic and acidic residues: residues 95-106 (RAQEEYERDHCS) and 124-135 (HGKETRLERQPR). Low complexity predominate over residues 147 to 163 (SSSSSSSSSPGLLCQGP). Residues 164–176 (CAPPPPLPAPTPQ) are compositionally biased toward pro residues.

The protein localises to the membrane. This is an uncharacterized protein from Mus musculus (Mouse).